Here is a 179-residue protein sequence, read N- to C-terminus: Pyridoxal 5'-phosphate synthase subunit PdxT (179 aa).

An L-glutamine-binding site is contributed by 48 to 50 (GES). The active-site Nucleophile is the C79. L-glutamine-binding positions include R101 and 127–128 (IR). Active-site charge relay system residues include H163 and E165.

Belongs to the glutaminase PdxT/SNO family. In the presence of PdxS, forms a dodecamer of heterodimers. Only shows activity in the heterodimer.

The catalysed reaction is aldehydo-D-ribose 5-phosphate + D-glyceraldehyde 3-phosphate + L-glutamine = pyridoxal 5'-phosphate + L-glutamate + phosphate + 3 H2O + H(+). It catalyses the reaction L-glutamine + H2O = L-glutamate + NH4(+). The protein operates within cofactor biosynthesis; pyridoxal 5'-phosphate biosynthesis. Its function is as follows. Catalyzes the hydrolysis of glutamine to glutamate and ammonia as part of the biosynthesis of pyridoxal 5'-phosphate. The resulting ammonia molecule is channeled to the active site of PdxS. This Francisella philomiragia subsp. philomiragia (strain ATCC 25017 / CCUG 19701 / FSC 153 / O#319-036) protein is Pyridoxal 5'-phosphate synthase subunit PdxT.